The sequence spans 562 residues: Probable tRNA (uracil-O(2)-)-methyltransferase (562 aa).

The segment at 520–546 (VSRRQQTNPKKQEATNRPKQPCWMSLN) is disordered. A C3H1-type zinc finger spans residues 535 to 562 (NRPKQPCWMSLNHPDGCPLGPESCRYLH).

It belongs to the TRM44 family.

Its subcellular location is the cytoplasm. It catalyses the reaction uridine(44) in tRNA(Ser) + S-adenosyl-L-methionine = 2'-O-methyluridine(44) in tRNA(Ser) + S-adenosyl-L-homocysteine + H(+). In terms of biological role, probable adenosyl-L-methionine (AdoMet)-dependent tRNA (uracil-O(2)-)-methyltransferase. The chain is Probable tRNA (uracil-O(2)-)-methyltransferase from Caenorhabditis briggsae.